A 211-amino-acid polypeptide reads, in one-letter code: MRLHVVDHPLVAHKLTTLRDQRTDSATFRRLADELVTLLAYEATRDVRTEQVDIHTPVSRTTGVKLSHPRPLVVPILRAGLGMLDGMVRLLPTAEVGFLGMVRNEETLQASTYATRMPDDLSGRQVYVLDPMLATGGTLVASIRELIKRGADDVTAVVLLAAPEGVELMERELAGTPVTVVTASVDERLNEQGYIVPGLGDAGDRMYGAAE.

Residues Arg-78, Arg-103, and 130–138 (DPMLATGGT) contribute to the 5-phospho-alpha-D-ribose 1-diphosphate site. Residues Ile-195 and 200–202 (GDA) each bind uracil. Asp-201 contributes to the 5-phospho-alpha-D-ribose 1-diphosphate binding site.

This sequence belongs to the UPRTase family. Mg(2+) serves as cofactor.

It catalyses the reaction UMP + diphosphate = 5-phospho-alpha-D-ribose 1-diphosphate + uracil. It participates in pyrimidine metabolism; UMP biosynthesis via salvage pathway; UMP from uracil: step 1/1. With respect to regulation, allosterically activated by GTP. Its function is as follows. Catalyzes the conversion of uracil and 5-phospho-alpha-D-ribose 1-diphosphate (PRPP) to UMP and diphosphate. The sequence is that of Uracil phosphoribosyltransferase from Streptomyces coelicolor (strain ATCC BAA-471 / A3(2) / M145).